We begin with the raw amino-acid sequence, 566 residues long: MDVENLIITTLKDKVRELTGNEMDIRLDEPPAINMGDYSTNISFRLAKDLKKAPKMIAEDIANSLSILGIEKIEAVNGYINFFMNYSDFSKETVSKISAEKENFGKLEKRDEKVILEHTSANPNGPFHIGHGRNMVIGDSLKRILIASGYDVETQYYVNDMGRQEAIVVFGNERFELDKSKKADHAIGEVYVETNKLLAENEELEQEILNLMKNYEEACEAGIENELTEKFKNAVDYSLGGFKETLSTLNIYHDKFVWESEFVKSGMVRDVIKRLMDTGKVVEDEVFRLDLSDYGLEKKLVLARLNGTSLYSTRDIVYHINKMENCDFAVNLLGADHKLTAVMVNKTLALLGYNEAEVVFYEFISLPEGSMSTRRGRFISMDELFEEAKSRAAEEVRKRGVAENEEEIEEIAKRIAVGAVRYNIVRIAPEKPMVFRWDEALDFEKVGCPVIQYAHARCSRILENVETISNDNLFAYEMNENEKTIVKLLSKLPKIVEKAAEVRKPQIVANYVLDVAQGFNKFYANCPVLKEENETIKNSRLAIVNTTKTVLENTLDLLGIEMPGKM.

A 'HIGH' region motif is present at residues 121-131 (ANPNGPFHIGH).

This sequence belongs to the class-I aminoacyl-tRNA synthetase family.

The protein resides in the cytoplasm. The enzyme catalyses tRNA(Arg) + L-arginine + ATP = L-arginyl-tRNA(Arg) + AMP + diphosphate. The protein is Arginine--tRNA ligase of Methanococcus maripaludis (strain C5 / ATCC BAA-1333).